Here is a 274-residue protein sequence, read N- to C-terminus: Kit ligand (274 aa).

The N-terminal stretch at 1-25 is a signal peptide; it reads MKKTQTWIVTCIYLQLLLFNPLVKT. The Extracellular segment spans residues 26–215; it reads KGLCRNRVTD…TNPIEDSSIQ (190 aa). 2 cysteine pairs are disulfide-bonded: Cys29–Cys114 and Cys68–Cys164. Asn90, Asn97, Asn145, and Asn196 each carry an N-linked (GlcNAc...) asparagine glycan. The helical transmembrane segment at 216-238 threads the bilayer; sequence WAVMALPACFSLVIGFAFGAFYW. The Cytoplasmic portion of the chain corresponds to 239–274; sequence KKKQPNLTRTVENIQINEEDNEISMLQEKEREFQEV.

The protein belongs to the SCF family. As to quaternary structure, homodimer, non-covalently linked. In terms of processing, a soluble form is produced by proteolytic processing of isoform 1 in the extracellular domain.

Its subcellular location is the cell membrane. The protein resides in the secreted. It localises to the cytoplasm. It is found in the cytoskeleton. The protein localises to the cell projection. Its subcellular location is the lamellipodium. The protein resides in the filopodium. Functionally, stimulates the proliferation of mast cells. Able to augment the proliferation of both myeloid and lymphoid hematopoietic progenitors in bone marrow culture. Also mediates cell-cell adhesion. Acts synergistically with other cytokines, probably interleukins. This is Kit ligand (KITLG) from Felis catus (Cat).